The chain runs to 206 residues: Small ribosomal subunit protein uS4 (206 aa).

In terms of domain architecture, S4 RNA-binding spans 96-156; that stretch reads CRLDNVVYRM…EKAKNQLRIV (61 aa).

This sequence belongs to the universal ribosomal protein uS4 family. Part of the 30S ribosomal subunit. Contacts protein S5. The interaction surface between S4 and S5 is involved in control of translational fidelity.

Functionally, one of the primary rRNA binding proteins, it binds directly to 16S rRNA where it nucleates assembly of the body of the 30S subunit. Its function is as follows. With S5 and S12 plays an important role in translational accuracy. The protein is Small ribosomal subunit protein uS4 of Pseudomonas fluorescens (strain SBW25).